We begin with the raw amino-acid sequence, 423 residues long: UPF0229 protein VV1_2091 (423 aa).

The segment at 81-111 is disordered; that stretch reads QFITGDKIERPKGGQGGGGAGDGDASADGEG. The span at 93–102 shows a compositional bias: gly residues; that stretch reads GGQGGGGAGD.

It belongs to the UPF0229 family.

This is UPF0229 protein VV1_2091 from Vibrio vulnificus (strain CMCP6).